The chain runs to 732 residues: Small conductance calcium-activated potassium channel protein 3 (732 aa).

Residues 1-11 (MDTSGHFHDSG) show a composition bias toward basic and acidic residues. Disordered regions lie at residues 1-82 (MDTS…QQAP) and 119-161 (AILH…QASP). Pro residues predominate over residues 35-61 (QPPPPPAPPAVPQQPPGPLLQPQPPQP). A compositionally biased stretch (low complexity) spans 62–82 (QQQQSQQQQQQQSQQQQQQAP). Polar residues predominate over residues 119–133 (AILHPSSRQGSQLNL). The segment covering 139–148 (GHSPSSTATS) has biased composition (low complexity). At Ser168 the chain carries Phosphoserine. The segment covering 241–257 (THNHQHAGTTAGSTTFP) has biased composition (polar residues). The tract at residues 241-260 (THNHQHAGTTAGSTTFPKAN) is disordered. The chain crosses the membrane as a helical span at residues 289–309 (LIFGMFGIVVMVIETELSWGL). A helical transmembrane segment spans residues 316–336 (FSLALKCLISLSTVILLGLII). Residues 367–387 (ISLEMLVCAIHPIPGEYKFFW) traverse the membrane as a helical segment. Residues 406-426 (IILSIPMFLRLYLIARVMLLH) traverse the membrane as a helical segment. The helical transmembrane segment at 455–475 (LMTICPGTVLLVFSISLWIIA) threads the bilayer. An intramembrane region (pore-forming) is located at residues 495–515 (FLGAMWLISITFLSIGYGDMV). The chain crosses the membrane as a helical span at residues 524–544 (VCLLTGIMGAGCTALVVAVVA). The segment at 562–638 (DTQLTKRIKN…LVDLSKMQNV (77 aa)) is calmodulin-binding. Residues 643–670 (ITELNDRSEDLEKQIGSLESKLEHLTAS) adopt a coiled-coil conformation. The tract at residues 704–732 (GTSHAPPSDSPIGISSTSFPTPYTSSSSC) is disordered. A compositionally biased stretch (low complexity) spans 718–732 (SSTSFPTPYTSSSSC).

It belongs to the potassium channel KCNN family. KCa2.3/KCNN3 subfamily. As to quaternary structure, homodimer. Heteromultimer with KCNN2 or KCNN1; this modulates plasma membrane expression and consequently the small conductance calcium-activated potassium channel activity. The complex is composed of 4 channel subunits each of which binds to a calmodulin subunit which regulates the channel activity through calcium-binding. Interacts with CALM1. In terms of tissue distribution, expressed at low levels in atrial and ventricular myocytes (at protein level).

The protein localises to the cell membrane. The protein resides in the cytoplasm. Its subcellular location is the myofibril. It localises to the sarcomere. It is found in the z line. It catalyses the reaction K(+)(in) = K(+)(out). With respect to regulation, inhibited by bee venom neurotoxin apamin. Small conductance calcium-activated potassium channel that mediates the voltage-independent transmembrane transfer of potassium across the cell membrane through a constitutive interaction with calmodulin which binds the intracellular calcium allowing its opening. The current is characterized by a voltage-independent activation, an intracellular calcium concentration increase-dependent activation and a single-channel conductance of 10 picosiemens. Also presents an inwardly rectifying current, thus reducing its already small outward conductance of potassium ions, which is particularly the case when the membrane potential displays positive values, above + 20 mV. Activation is followed by membrane hyperpolarization. Thought to regulate neuronal excitability by contributing to the slow component of synaptic afterhyperpolarization. This Mus musculus (Mouse) protein is Small conductance calcium-activated potassium channel protein 3.